Here is a 209-residue protein sequence, read N- to C-terminus: Na(+)-translocating NADH-quinone reductase subunit D (209 aa).

5 helical membrane-spanning segments follow: residues Leu42 to Ile62, Ile66 to Val86, Val103 to Met123, Phe131 to Val151, and Asn178 to Leu198.

This sequence belongs to the NqrDE/RnfAE family. As to quaternary structure, composed of six subunits; NqrA, NqrB, NqrC, NqrD, NqrE and NqrF.

The protein resides in the cell inner membrane. The enzyme catalyses a ubiquinone + n Na(+)(in) + NADH + H(+) = a ubiquinol + n Na(+)(out) + NAD(+). In terms of biological role, NQR complex catalyzes the reduction of ubiquinone-1 to ubiquinol by two successive reactions, coupled with the transport of Na(+) ions from the cytoplasm to the periplasm. NqrA to NqrE are probably involved in the second step, the conversion of ubisemiquinone to ubiquinol. The chain is Na(+)-translocating NADH-quinone reductase subunit D from Yersinia pseudotuberculosis serotype O:1b (strain IP 31758).